The sequence spans 404 residues: Dihydrolipoyllysine-residue acetyltransferase component of pyruvate dehydrogenase complex (404 aa).

The region spanning 2-78 (PIKILMPALS…PVNSLIAVLS (77 aa)) is the Lipoyl-binding domain. Lys43 carries the N6-lipoyllysine modification. The 38-residue stretch at 128–165 (FASPLAKRLAKIRNIRLESVQGSGPHGRIVKQDILSYS) folds into the Peripheral subunit-binding (PSBD) domain. The active site involves His377.

The protein belongs to the 2-oxoacid dehydrogenase family. In terms of assembly, forms a 24-polypeptide structural core with octahedral symmetry. Requires (R)-lipoate as cofactor.

It carries out the reaction N(6)-[(R)-dihydrolipoyl]-L-lysyl-[protein] + acetyl-CoA = N(6)-[(R)-S(8)-acetyldihydrolipoyl]-L-lysyl-[protein] + CoA. Functionally, the pyruvate dehydrogenase complex catalyzes the overall conversion of pyruvate to acetyl-CoA and CO(2). It contains multiple copies of three enzymatic components: pyruvate dehydrogenase (E1), dihydrolipoamide acetyltransferase (E2) and lipoamide dehydrogenase (E3). The chain is Dihydrolipoyllysine-residue acetyltransferase component of pyruvate dehydrogenase complex (pdhC) from Rickettsia typhi (strain ATCC VR-144 / Wilmington).